The chain runs to 586 residues: RNA-directed RNA polymerase subunit beta (586 aa).

The RdRp catalytic domain occupies 259–391; that stretch reads VRAYSGSCSN…TNEKKTFFDG (133 aa). Mg(2+)-binding residues include Asp-274, Asp-359, and Asp-360.

In terms of assembly, homodimer; the replicase complex can dimerize. Part of the viral RNA-dependent RNA polymerase complex, the other subunits are the host ribosomal protein S1, EF-Tu and EF-Ts. S1 is needed for the initiation of genomic RNA (+)-strand replication. Mg(2+) is required as a cofactor.

It catalyses the reaction RNA(n) + a ribonucleoside 5'-triphosphate = RNA(n+1) + diphosphate. Its function is as follows. This is the catalytic subunit of the viral RNA-dependent RNA polymerase complex. This complex is involved in viral RNA replication that produces (+)-stranded genomes via a complementary, (-)-stranded intermediate. Binds RNA cooperatively with the host ribosomal protein S1. The polypeptide is RNA-directed RNA polymerase subunit beta (Escherichia coli).